A 251-amino-acid chain; its full sequence is Uroporphyrinogen-III C-methyltransferase (251 aa).

S-adenosyl-L-homocysteine-binding positions include P17, 93–95, 123–124, M177, and A206; these read GGD and TS.

The protein belongs to the precorrin methyltransferase family.

It is found in the plastid. Its subcellular location is the chloroplast. The enzyme catalyses uroporphyrinogen III + 2 S-adenosyl-L-methionine = precorrin-2 + 2 S-adenosyl-L-homocysteine + H(+). It participates in cofactor biosynthesis; adenosylcobalamin biosynthesis; precorrin-2 from uroporphyrinogen III: step 1/1. It functions in the pathway porphyrin-containing compound metabolism; siroheme biosynthesis; precorrin-2 from uroporphyrinogen III: step 1/1. Catalyzes the two successive C-2 and C-7 methylation reactions involved in the conversion of uroporphyrinogen III to precorrin-2 via the intermediate formation of precorrin-1. It is a step in the biosynthesis of both cobalamin (vitamin B12) and siroheme. The sequence is that of Uroporphyrinogen-III C-methyltransferase (cobA) from Cyanidium caldarium (Red alga).